The chain runs to 641 residues: MLHGRLRDILRLLMAAEAPVTSSFFAAQLNVTTRTVRNDIKELQGVLSGHGAFVQSVRGSGYKLRIDDEQVFRTLLQDEFQQKKGLPVLPEERMAYLMKRLLLADHYLKLDELAEELFISKSTLQTDLKEVKKRLLPYRIVMETRPNYGFKLRGDEVQMRYCMAEYIVDERETEIDVLNEKADILPKEEIEIIRSAILKKMKNDRIPLSNMGLNNLIIHIAIACKRIRTENYVSLFPKDMDHILHQKEYQAAEAIVKELESKLSVTFPKDETAYITMHLLGTKRMTQSQCGEDTFSIEEETDQLTLAMIKAVDRELKLGILHDKELKIGLALHMKPAISRNRYGMNLRNPMLAAIKEHYPLAFEAGIIAGIVIKEQTGIEIHENEIGYLALHFGAAIERKKTESPPKRCIIVCASGAGSAQLLREKLRSHFGKRLDILGTAEYYSLDQMSYESIDFVISTIPIKKELPVPVLKVNTILGGTDFTKIESILSDEKEKANRYLKKELVFFQEDLRSKEEVIQFLGQKVVECGFADEEIIDSIFEREDMSPTCFGNLVAIPHPLVPQTKTTFWAVCTLKKPIDWESQRVQFVCLLCVEKENKADLQSMYKLLGSILDDPAAMNQLIKCRSYQELSDVFDQKMLS.

PRD domains follow at residues 184–289 (ILPK…TQSQ) and 296–403 (SIEE…KKTE). 4 positions are modified to phosphohistidine; by HPr: H219, H278, H333, and H392. One can recognise a PTS EIIB type-2 domain in the interval 407–498 (KRCIIVCASG…ILSDEKEKAN (92 aa)). C413 bears the Phosphocysteine; by EIIA mark. Positions 499-638 (RYLKKELVFF…QELSDVFDQK (140 aa)) constitute a PTS EIIA type-2 domain. H559 carries the post-translational modification Phosphohistidine; by EIIB.

It belongs to the transcriptional antiterminator BglG family.

With respect to regulation, the regulatory activity of LicR is modulated by phosphorylation and dephosphorylation of the various LicR domains. It becomes activated via phosphoryl group transfer from PEP, EI and HPr on the two conserved histidine residues in the PRD 2 domain, whereas phosphorylation of the EIIA-like domain on His-559 by the PTS EIIB component LicB inactivates LicR. Functionally, positive regulator of the licABCH operon. This is Probable licABCH operon regulator (licR) from Bacillus subtilis (strain 168).